The sequence spans 217 residues: MENQPKLNSSKEVIAFLAERFPHCFSAEGEARPLKIGIFQDLVDRVAGEMNLSKTQLRSALRLYTSSWRYLYGVKPGATRVDLDGNPCGELDEQHVEHARKQLEEAKARVQAQRAEQQAKKRERKPRPTTPRRKEGAERKPRAQKPVEKAPKTVKAPREEQHTPVSDISALTVGQALKVKAGQNAMDATVLEITKDGVRVQLNSGMSLIVRAEHLVF.

The interval 105–166 (EAKARVQAQR…PREEQHTPVS (62 aa)) is disordered. Positions 121–131 (KRERKPRPTTP) are enriched in basic residues. Positions 132 to 162 (RRKEGAERKPRAQKPVEKAPKTVKAPREEQH) are enriched in basic and acidic residues.

Belongs to the ProQ family.

The protein localises to the cytoplasm. RNA chaperone with significant RNA binding, RNA strand exchange and RNA duplexing activities. May regulate ProP activity through an RNA-based, post-transcriptional mechanism. This chain is RNA chaperone ProQ, found in Escherichia coli O8 (strain IAI1).